Here is a 231-residue protein sequence, read N- to C-terminus: Ribonuclease HII (231 aa).

In terms of domain architecture, RNase H type-2 spans 23–214 (GPVAGVDEAG…VAKAHREWAL (192 aa)). A divalent metal cation-binding residues include D29, E30, and D123.

The protein belongs to the RNase HII family. It depends on Mn(2+) as a cofactor. Mg(2+) serves as cofactor.

It is found in the cytoplasm. It carries out the reaction Endonucleolytic cleavage to 5'-phosphomonoester.. Endonuclease that specifically degrades the RNA of RNA-DNA hybrids. This chain is Ribonuclease HII, found in Corynebacterium efficiens (strain DSM 44549 / YS-314 / AJ 12310 / JCM 11189 / NBRC 100395).